The sequence spans 674 residues: Inorganic pyrophosphatase TTM2 (674 aa).

Residues 248-410 form the CYTH domain; the sequence is SPTYILKSRK…PRTYIEQIQL (163 aa). Disordered stretches follow at residues 457-498 and 619-640; these read KNLK…SPAN and RSRL…SKSS. Residues 484-496 show a composition bias toward basic and acidic residues; sequence SDRRYEERNHDSP. The segment covering 623–640 has biased composition (low complexity); that stretch reads ARTGSSNSGNRGRSSKSS. Residues 650–670 form a helical membrane-spanning segment; sequence LPLVLTVAICSIGIIVIKSYI.

It depends on Mg(2+) as a cofactor. As to expression, predominantly expressed in the shoot apices of inflorescences.

It localises to the mitochondrion outer membrane. The enzyme catalyses diphosphate + H2O = 2 phosphate + H(+). Functionally, exhibits pyrophosphatase activity with stronger affinity for pyrophosphate (PPi), moderate affinity for ATP and ADP, and weak affinity for tripolyphosphate (PPPi). No activity observed toward uridine substrate. Negative regulator of the salicylic acid (SA)-mediated amplification of defense responses against both virulent and avirulent pathogens, including oomycetes (e.g. H.arabidopsidis) and bacteria (e.g. P.syringae). Represses systemic acquired resistance (SAR). This is Inorganic pyrophosphatase TTM2 from Arabidopsis thaliana (Mouse-ear cress).